A 687-amino-acid polypeptide reads, in one-letter code: Chloride channel protein ClC-Kb (687 aa).

Residues 1 to 50 lie on the Cytoplasmic side of the membrane; the sequence is MEEIVGLREGSPRKPVPLQELWRPCPRIRRNIQGSLEWLKERLFRVGEDW. 2 helical membrane passes run 51-82 and 91-111; these read YFLV…KWLY and LRYL…SGFS. An intramembrane region (helical) is located at residues 116–127; that stretch reads PSSGGSGIPEVK. Residue Ser121 coordinates chloride. The next 2 membrane-spanning stretches (helical) occupy residues 141–160 and 161–180; these read IKNF…TGST and IFLG…AAYL. Asn193 is a glycosylation site (N-linked (GlcNAc...) asparagine). Residues 203–224 constitute an intramembrane region (helical); it reads AGAAVGVATVFAAPISGVLFSI. A helical transmembrane segment spans residues 236–255; that stretch reads YWRGFFAATCGAFMFHLLAV. Ca(2+)-binding residues include Glu259, Glu261, Asp278, and Glu281. A run of 2 helical transmembrane segments spans residues 282 to 310 and 325 to 342; these read IFFF…LFFL and PLYS…TYPP. Residues 349–360 constitute an intramembrane region (helical); sequence ASRLSMSEYLET. The next 2 helical transmembrane spans lie at 400 to 420 and 421 to 440; these read GTLV…TTIP and IPAG…GRLF. Phe426 is a binding site for chloride. An intramembrane region (helical) is located at residues 464-496; that stretch reads GAYALAGAAAFSGAVTHTLSTALLAFEVSGQIV. The chain crosses the membrane as a helical span at residues 500 to 520; sequence PVLMAVLAANAICQSYQPSFY. Residues 521–687 lie on the Cytoplasmic side of the membrane; that stretch reads DGTIIVKKLP…STLTNPPAPK (167 aa). 2 consecutive CBS domains span residues 551 to 609 and 626 to 687; these read MNCT…DSAS and CPTQ…PAPK.

This sequence belongs to the chloride channel (TC 2.A.49) family. CLCNKB subfamily. In terms of assembly, homodimer. Interacts with BSND. Post-translationally, N-glycosylated. In terms of tissue distribution, expressed predominantly in the kidney. Expressed in all segments of the nephron examined, including the S2 segment and the glomerulus.

It localises to the basolateral cell membrane. The enzyme catalyses chloride(in) = chloride(out). It carries out the reaction iodide(out) = iodide(in). The catalysed reaction is nitrate(in) = nitrate(out). It catalyses the reaction bromide(in) = bromide(out). Anion-selective channel permeable to small monovalent anions with ion selectivity for chloride &gt; bromide &gt; nitrate &gt; iodide. Forms a homodimeric channel where each subunit has its own ion conduction pathway. May conduct double-barreled currents controlled by two types of gates, two fast gates that control each subunit independently and a slow common gate that opens and shuts off both subunits simultaneously. Assembles with the regulatory subunit BSND/Barttin for sorting at the basolateral plasma membrane domain and functional switch to the ion conducting state. CLCNKB:BSND channels display mostly a linear current-voltage relationship controlled by common gate. Mediates chloride conductance along nephron segments, namely the thick ascending limb of Henle's loop, convoluted tubule and the collecting duct, contributing to the maintenance of systemic acid-base and electrolyte homeostasis. Conducts chloride currents in the stria vascularis of the inner ear to establish the endocochlear potential necessary for normal hearing. The protein is Chloride channel protein ClC-Kb of Rattus norvegicus (Rat).